The sequence spans 949 residues: Bifunctional uridylyltransferase/uridylyl-removing enzyme (949 aa).

The tract at residues 1 to 377 (MARHETSFPE…RFRNRVRKIA (377 aa)) is uridylyltransferase. The tract at residues 378-733 (GTLDFVDDGG…VRTHDFHAIT (356 aa)) is uridylyl-removing. The HD domain occupies 494–610 (VDEHLLRSVD…VDFAERVQSL (117 aa)). ACT domains follow at residues 734–816 (EITV…VIAS) and 845–926 (VIEV…ERMP). Positions 926–949 (PSGIIAPTPVSRVPHGSKTTKAET) are disordered.

It belongs to the GlnD family. Mg(2+) is required as a cofactor.

It carries out the reaction [protein-PII]-L-tyrosine + UTP = [protein-PII]-uridylyl-L-tyrosine + diphosphate. It catalyses the reaction [protein-PII]-uridylyl-L-tyrosine + H2O = [protein-PII]-L-tyrosine + UMP + H(+). Its activity is regulated as follows. Uridylyltransferase (UTase) activity is inhibited by glutamine, while glutamine activates uridylyl-removing (UR) activity. Its function is as follows. Modifies, by uridylylation and deuridylylation, the PII regulatory proteins (GlnB and homologs), in response to the nitrogen status of the cell that GlnD senses through the glutamine level. Under low glutamine levels, catalyzes the conversion of the PII proteins and UTP to PII-UMP and PPi, while under higher glutamine levels, GlnD hydrolyzes PII-UMP to PII and UMP (deuridylylation). Thus, controls uridylylation state and activity of the PII proteins, and plays an important role in the regulation of nitrogen fixation and metabolism. The polypeptide is Bifunctional uridylyltransferase/uridylyl-removing enzyme (Rhizobium meliloti (strain 1021) (Ensifer meliloti)).